A 397-amino-acid chain; its full sequence is Succinate--CoA ligase [ADP-forming] subunit beta (397 aa).

The ATP-grasp domain occupies 9-254 (KALLRQYGAP…ETEEDPKELA (246 aa)). Residues K46, 53 to 55 (GRG), E109, S112, and E117 contribute to the ATP site. The Mg(2+) site is built by N209 and D223. Substrate contacts are provided by residues N274 and 331–333 (GIM).

This sequence belongs to the succinate/malate CoA ligase beta subunit family. In terms of assembly, heterotetramer of two alpha and two beta subunits. Mg(2+) serves as cofactor.

It catalyses the reaction succinate + ATP + CoA = succinyl-CoA + ADP + phosphate. The enzyme catalyses GTP + succinate + CoA = succinyl-CoA + GDP + phosphate. The protein operates within carbohydrate metabolism; tricarboxylic acid cycle; succinate from succinyl-CoA (ligase route): step 1/1. In terms of biological role, succinyl-CoA synthetase functions in the citric acid cycle (TCA), coupling the hydrolysis of succinyl-CoA to the synthesis of either ATP or GTP and thus represents the only step of substrate-level phosphorylation in the TCA. The beta subunit provides nucleotide specificity of the enzyme and binds the substrate succinate, while the binding sites for coenzyme A and phosphate are found in the alpha subunit. The chain is Succinate--CoA ligase [ADP-forming] subunit beta from Paracoccus denitrificans (strain Pd 1222).